Reading from the N-terminus, the 60-residue chain is Bowman-Birk type proteinase inhibitor C1 (60 aa).

4 disulfides stabilise this stretch: cysteine 5–cysteine 21, cysteine 11–cysteine 19, cysteine 28–cysteine 35, and cysteine 32–cysteine 49.

It belongs to the Bowman-Birk serine protease inhibitor family. Expressed in bulb (at protein level).

Its function is as follows. Serine protease inhibitor. Strongly inhibits trypsin (Ki = 0.22 nM) and very weakly inhibits chymotrypsin (Ki = 1200 nM). Does not inhibit bacterial subtilisin. The polypeptide is Bowman-Birk type proteinase inhibitor C1 (Hyacinthus orientalis (Common hyacinth)).